A 101-amino-acid polypeptide reads, in one-letter code: Interleukin-8 (101 aa).

The first 22 residues, 1–22 (MTSKLAVALLAAFVLSAALCEA), serve as a signal peptide directing secretion. Citrulline is present on Arg-27. Intrachain disulfides connect Cys-34–Cys-61 and Cys-36–Cys-77.

It belongs to the intercrine alpha (chemokine CxC) family. Homodimer. Interacts with TNFAIP6 (via Link domain); this interaction interferes with chemokine binding to glycosaminoglycans. Post-translationally, citrullination at Arg-27 prevents proteolysis, and dampens tissue inflammation, it also enhances leukocytosis, possibly through impaired chemokine clearance from the blood circulation.

It is found in the secreted. Functionally, chemotactic factor that mediates inflammatory response by attracting neutrophils, basophils, and T-cells to clear pathogens and protect the host from infection. Also plays an important role in neutrophil activation. Released in response to an inflammatory stimulus, exerts its effect by binding to the G-protein-coupled receptors CXCR1 and CXCR2, primarily found in neutrophils, monocytes and endothelial cells. G-protein heterotrimer (alpha, beta, gamma subunits) constitutively binds to CXCR1/CXCR2 receptor and activation by IL8 leads to beta and gamma subunits release from Galpha (GNAI2 in neutrophils) and activation of several downstream signaling pathways including PI3K and MAPK pathways. In Canis lupus familiaris (Dog), this protein is Interleukin-8 (CXCL8).